The chain runs to 255 residues: Sugar fermentation stimulation protein homolog (255 aa).

The protein belongs to the SfsA family.

This chain is Sugar fermentation stimulation protein homolog, found in Synechococcus sp. (strain WH7803).